A 271-amino-acid polypeptide reads, in one-letter code: Type III pantothenate kinase (271 aa).

6–13 (DVRNTNIV) provides a ligand contact to ATP. Residue 109-112 (GADR) coordinates substrate. The Proton acceptor role is filled by Asp-111. K(+) is bound at residue Asp-131. Thr-134 serves as a coordination point for ATP. Residue Thr-186 coordinates substrate.

The protein belongs to the type III pantothenate kinase family. In terms of assembly, homodimer. The cofactor is NH4(+). K(+) is required as a cofactor.

Its subcellular location is the cytoplasm. The catalysed reaction is (R)-pantothenate + ATP = (R)-4'-phosphopantothenate + ADP + H(+). It functions in the pathway cofactor biosynthesis; coenzyme A biosynthesis; CoA from (R)-pantothenate: step 1/5. Functionally, catalyzes the phosphorylation of pantothenate (Pan), the first step in CoA biosynthesis. The protein is Type III pantothenate kinase of Rhodococcus opacus (strain B4).